Consider the following 357-residue polypeptide: Dihydroorotate dehydrogenase (quinone) (357 aa).

FMN contacts are provided by residues 67-71 and Thr-91; that span reads AGFDK. Lys-71 is a substrate binding site. Residue 116 to 120 coordinates substrate; it reads NRMGF. Residues Asn-153 and Asn-186 each coordinate FMN. Residue Asn-186 coordinates substrate. Residue Ser-189 is the Nucleophile of the active site. Asn-191 contributes to the substrate binding site. 2 residues coordinate FMN: Lys-228 and Thr-256. 257 to 258 contacts substrate; that stretch reads NT. FMN contacts are provided by residues Gly-282, Gly-311, and 332–333; that span reads YT.

The protein belongs to the dihydroorotate dehydrogenase family. Type 2 subfamily. In terms of assembly, monomer. It depends on FMN as a cofactor.

It localises to the cell membrane. It carries out the reaction (S)-dihydroorotate + a quinone = orotate + a quinol. It functions in the pathway pyrimidine metabolism; UMP biosynthesis via de novo pathway; orotate from (S)-dihydroorotate (quinone route): step 1/1. In terms of biological role, catalyzes the conversion of dihydroorotate to orotate with quinone as electron acceptor. The sequence is that of Dihydroorotate dehydrogenase (quinone) from Arthrobacter sp. (strain FB24).